Consider the following 75-residue polypeptide: Penaeidin-3n (75 aa).

The first 19 residues, 1–19 (MRLVVCLVFLASFALVCQG), serve as a signal peptide directing secretion. A Pyrrolidone carboxylic acid modification is found at Gln-20. Cystine bridges form between Cys-44-Cys-59 and Cys-48-Cys-66. Position 74 is a serine amide (Ser-74).

This sequence belongs to the penaeidin family.

The protein resides in the cytoplasmic granule. Functionally, antibacterial and antifungal activity. Presents chitin-binding activity. The protein is Penaeidin-3n of Penaeus setiferus (Atlantic white shrimp).